The sequence spans 155 residues: MMTQDYKLQVEAIKCGTVIDHIPAQIGFKLLSLFKLTATDQRITIGLNLPSKRSGRKDLIKIENTFLTEQQANQLAMYAPDATVNRIDNYEVVKKLTLSLPERIDAVLTCPNSNCISHNEPVDSSFTVKAQRGEISLKCKYCEKEFDHLTVLHAD.

The Zn(2+) site is built by C110, C115, C139, and C142.

Belongs to the PyrI family. Contains catalytic and regulatory chains. Zn(2+) serves as cofactor.

Involved in allosteric regulation of aspartate carbamoyltransferase. The sequence is that of Aspartate carbamoyltransferase regulatory chain from Yersinia pestis bv. Antiqua (strain Antiqua).